Here is a 254-residue protein sequence, read N- to C-terminus: Pyrroloquinoline-quinone synthase (254 aa).

This sequence belongs to the PqqC family.

It carries out the reaction 6-(2-amino-2-carboxyethyl)-7,8-dioxo-1,2,3,4,7,8-hexahydroquinoline-2,4-dicarboxylate + 3 O2 = pyrroloquinoline quinone + 2 H2O2 + 2 H2O + H(+). It functions in the pathway cofactor biosynthesis; pyrroloquinoline quinone biosynthesis. In terms of biological role, ring cyclization and eight-electron oxidation of 3a-(2-amino-2-carboxyethyl)-4,5-dioxo-4,5,6,7,8,9-hexahydroquinoline-7,9-dicarboxylic-acid to PQQ. This is Pyrroloquinoline-quinone synthase from Rhodopseudomonas palustris (strain TIE-1).